A 226-amino-acid chain; its full sequence is Phosphatidylserine decarboxylase proenzyme (226 aa).

The Schiff-base intermediate with substrate; via pyruvic acid role is filled by Ser184. Residue Ser184 is modified to Pyruvic acid (Ser); by autocatalysis.

Belongs to the phosphatidylserine decarboxylase family. PSD-A subfamily. Heterodimer of a large membrane-associated beta subunit and a small pyruvoyl-containing alpha subunit. The cofactor is pyruvate. Is synthesized initially as an inactive proenzyme. Formation of the active enzyme involves a self-maturation process in which the active site pyruvoyl group is generated from an internal serine residue via an autocatalytic post-translational modification. Two non-identical subunits are generated from the proenzyme in this reaction, and the pyruvate is formed at the N-terminus of the alpha chain, which is derived from the carboxyl end of the proenzyme. The post-translation cleavage follows an unusual pathway, termed non-hydrolytic serinolysis, in which the side chain hydroxyl group of the serine supplies its oxygen atom to form the C-terminus of the beta chain, while the remainder of the serine residue undergoes an oxidative deamination to produce ammonia and the pyruvoyl prosthetic group on the alpha chain.

The protein resides in the cell membrane. The catalysed reaction is a 1,2-diacyl-sn-glycero-3-phospho-L-serine + H(+) = a 1,2-diacyl-sn-glycero-3-phosphoethanolamine + CO2. Its pathway is phospholipid metabolism; phosphatidylethanolamine biosynthesis; phosphatidylethanolamine from CDP-diacylglycerol: step 2/2. Functionally, catalyzes the formation of phosphatidylethanolamine (PtdEtn) from phosphatidylserine (PtdSer). In Ehrlichia canis (strain Jake), this protein is Phosphatidylserine decarboxylase proenzyme.